A 106-amino-acid polypeptide reads, in one-letter code: Large ribosomal subunit protein bL21 (106 aa).

It belongs to the bacterial ribosomal protein bL21 family. As to quaternary structure, part of the 50S ribosomal subunit. Contacts protein L20.

Its function is as follows. This protein binds to 23S rRNA in the presence of protein L20. This is Large ribosomal subunit protein bL21 from Chlamydia caviae (strain ATCC VR-813 / DSM 19441 / 03DC25 / GPIC) (Chlamydophila caviae).